A 342-amino-acid chain; its full sequence is Methylthioribose-1-phosphate isomerase (342 aa).

Residues 44-46 (RGA), Arg87, and Gln194 contribute to the substrate site. The active-site Proton donor is the Asp235. Substrate is bound at residue 245–246 (NK).

It belongs to the eIF-2B alpha/beta/delta subunits family. MtnA subfamily.

The catalysed reaction is 5-(methylsulfanyl)-alpha-D-ribose 1-phosphate = 5-(methylsulfanyl)-D-ribulose 1-phosphate. It functions in the pathway amino-acid biosynthesis; L-methionine biosynthesis via salvage pathway; L-methionine from S-methyl-5-thio-alpha-D-ribose 1-phosphate: step 1/6. In terms of biological role, catalyzes the interconversion of methylthioribose-1-phosphate (MTR-1-P) into methylthioribulose-1-phosphate (MTRu-1-P). This chain is Methylthioribose-1-phosphate isomerase, found in Acetivibrio thermocellus (strain ATCC 27405 / DSM 1237 / JCM 9322 / NBRC 103400 / NCIMB 10682 / NRRL B-4536 / VPI 7372) (Clostridium thermocellum).